A 558-amino-acid chain; its full sequence is Probable beta-glucosidase btgE (558 aa).

Positions methionine 1–alanine 18 are cleaved as a signal peptide. Disordered regions lie at residues serine 64–proline 105 and leucine 251–methionine 305. Composition is skewed to low complexity over residues proline 76–proline 105 and proline 252–alanine 292. A compositionally biased stretch (polar residues) spans glutamate 293–methionine 305. The Proton donor role is filled by glutamate 399. Glutamate 495 acts as the Nucleophile in catalysis.

The protein belongs to the glycosyl hydrolase 17 family.

Its subcellular location is the secreted. The protein localises to the cell wall. It carries out the reaction Hydrolysis of terminal, non-reducing beta-D-glucosyl residues with release of beta-D-glucose.. Its pathway is glycan metabolism; cellulose degradation. Beta-glucosidases are one of a number of cellulolytic enzymes involved in the degradation of cellulosic biomass. Catalyzes the last step releasing glucose from the inhibitory cellobiose. This chain is Probable beta-glucosidase btgE (btgE), found in Aspergillus terreus (strain NIH 2624 / FGSC A1156).